The following is a 200-amino-acid chain: Urease accessory protein UreG (200 aa).

Gly-8–Thr-15 serves as a coordination point for GTP.

It belongs to the SIMIBI class G3E GTPase family. UreG subfamily. Homodimer. UreH, UreF and UreG form a complex that acts as a GTP-hydrolysis-dependent molecular chaperone, activating the urease apoprotein by helping to assemble the nickel containing metallocenter of UreC. The UreE protein probably delivers the nickel.

It localises to the cytoplasm. Functionally, facilitates the functional incorporation of the urease nickel metallocenter. This process requires GTP hydrolysis, probably effectuated by UreG. This Helicobacter hepaticus (strain ATCC 51449 / 3B1) protein is Urease accessory protein UreG.